Reading from the N-terminus, the 338-residue chain is Beta-ketoacyl-[acyl-carrier-protein] synthase III (338 aa).

Residues C119 and H261 contribute to the active site. The interval 262–266 is ACP-binding; sequence QANQR. N291 is an active-site residue.

Belongs to the thiolase-like superfamily. FabH family. Homodimer.

It is found in the cytoplasm. It catalyses the reaction malonyl-[ACP] + acetyl-CoA + H(+) = 3-oxobutanoyl-[ACP] + CO2 + CoA. Its pathway is lipid metabolism; fatty acid biosynthesis. In terms of biological role, catalyzes the condensation reaction of fatty acid synthesis by the addition to an acyl acceptor of two carbons from malonyl-ACP. Catalyzes the first condensation reaction which initiates fatty acid synthesis and may therefore play a role in governing the total rate of fatty acid production. Possesses both acetoacetyl-ACP synthase and acetyl transacylase activities. Its substrate specificity determines the biosynthesis of branched-chain and/or straight-chain of fatty acids. This is Beta-ketoacyl-[acyl-carrier-protein] synthase III from Prochlorococcus marinus (strain SARG / CCMP1375 / SS120).